Here is a 68-residue protein sequence, read N- to C-terminus: Conotoxin Lp5.2 (68 aa).

The first 19 residues, 1-19 (MRCVPVFIILLLLASPAAP), serve as a signal peptide directing secretion. Positions 20-54 (KSLETRIQNDLIRAGLTDADLKTEKGFLSGLLNVA) are excised as a propeptide.

It belongs to the conotoxin T superfamily. Post-translationally, contains 2 disulfide bonds that can be either 'C1-C3, C2-C4' or 'C1-C4, C2-C3', since these disulfide connectivities have been observed for conotoxins with cysteine framework V (for examples, see AC P0DQQ7 and AC P81755). As to expression, expressed by the venom duct.

It is found in the secreted. In Conus leopardus (Leopard cone), this protein is Conotoxin Lp5.2.